The following is a 131-amino-acid chain: Protein Turandot M (131 aa).

The N-terminal stretch at 1–23 (MNPTVYLSCLVVFSLFYLGKAQA) is a signal peptide.

This sequence belongs to the Turandot family.

The protein localises to the secreted. In terms of biological role, a humoral factor that may play a role in stress tolerance. Requires Mekk1 expression in the fat body to regulate response to septic injury and consequent immune response. The polypeptide is Protein Turandot M (Drosophila yakuba (Fruit fly)).